The following is a 71-amino-acid chain: Beta-defensin 25 (71 aa).

Residues 1–22 (MAKWILLIVALLVLSHVPPGST) form the signal peptide. Cystine bridges form between Cys27-Cys54, Cys34-Cys48, and Cys38-Cys55.

The protein belongs to the beta-defensin family.

Its subcellular location is the secreted. Its function is as follows. Has antibacterial activity. This is Beta-defensin 25 (Defb25) from Mus musculus (Mouse).